Consider the following 422-residue polypeptide: Phospho-N-acetylmuramoyl-pentapeptide-transferase (422 aa).

A run of 9 helical transmembrane segments spans residues 28-48, 71-91, 95-115, 136-156, 211-231, 239-259, 279-299, 313-333, and 399-419; these read LMAVILALLISSIWGDKFINL, VGVPSMGGVIIIVAILIPCLL, LDNIYMILMLITTVWLGSLGF, IIGQVGLGLIVGLTLYLSPDV, AGWFLFVIITIFVVTAVSNGA, GMAAGNSAIIGATLGILAYVS, LVIYICAFIGALIGFLWYNAY, IGGIIAVFAIIIHKELLIPIL, and KITVRFWIVTIVLAAITIITL.

The protein belongs to the glycosyltransferase 4 family. MraY subfamily. It depends on Mg(2+) as a cofactor.

Its subcellular location is the cell inner membrane. It carries out the reaction UDP-N-acetyl-alpha-D-muramoyl-L-alanyl-gamma-D-glutamyl-meso-2,6-diaminopimeloyl-D-alanyl-D-alanine + di-trans,octa-cis-undecaprenyl phosphate = di-trans,octa-cis-undecaprenyl diphospho-N-acetyl-alpha-D-muramoyl-L-alanyl-D-glutamyl-meso-2,6-diaminopimeloyl-D-alanyl-D-alanine + UMP. The protein operates within cell wall biogenesis; peptidoglycan biosynthesis. In terms of biological role, catalyzes the initial step of the lipid cycle reactions in the biosynthesis of the cell wall peptidoglycan: transfers peptidoglycan precursor phospho-MurNAc-pentapeptide from UDP-MurNAc-pentapeptide onto the lipid carrier undecaprenyl phosphate, yielding undecaprenyl-pyrophosphoryl-MurNAc-pentapeptide, known as lipid I. This is Phospho-N-acetylmuramoyl-pentapeptide-transferase from Bacteroides thetaiotaomicron (strain ATCC 29148 / DSM 2079 / JCM 5827 / CCUG 10774 / NCTC 10582 / VPI-5482 / E50).